Consider the following 362-residue polypeptide: Biotin synthase (362 aa).

In terms of domain architecture, Radical SAM core spans 70–305; the sequence is CCGNVVDLCS…QQIIRYAGGR (236 aa). Residues cysteine 88, cysteine 92, and cysteine 95 each coordinate [4Fe-4S] cluster. 4 residues coordinate [2Fe-2S] cluster: cysteine 133, cysteine 170, cysteine 230, and arginine 300.

It belongs to the radical SAM superfamily. Biotin synthase family. In terms of assembly, homodimer. Requires [4Fe-4S] cluster as cofactor. The cofactor is [2Fe-2S] cluster.

It carries out the reaction (4R,5S)-dethiobiotin + (sulfur carrier)-SH + 2 reduced [2Fe-2S]-[ferredoxin] + 2 S-adenosyl-L-methionine = (sulfur carrier)-H + biotin + 2 5'-deoxyadenosine + 2 L-methionine + 2 oxidized [2Fe-2S]-[ferredoxin]. The protein operates within cofactor biosynthesis; biotin biosynthesis; biotin from 7,8-diaminononanoate: step 2/2. Its function is as follows. Catalyzes the conversion of dethiobiotin (DTB) to biotin by the insertion of a sulfur atom into dethiobiotin via a radical-based mechanism. The protein is Biotin synthase of Synechocystis sp. (strain ATCC 27184 / PCC 6803 / Kazusa).